Here is a 271-residue protein sequence, read N- to C-terminus: Urease accessory protein UreD (271 aa).

It belongs to the UreD family. UreD, UreF and UreG form a complex that acts as a GTP-hydrolysis-dependent molecular chaperone, activating the urease apoprotein by helping to assemble the nickel containing metallocenter of UreC. The UreE protein probably delivers the nickel.

Its subcellular location is the cytoplasm. In terms of biological role, required for maturation of urease via the functional incorporation of the urease nickel metallocenter. The sequence is that of Urease accessory protein UreD from Haemophilus influenzae (strain PittGG).